The primary structure comprises 272 residues: Putative hydro-lyase RPB_3621 (272 aa).

It belongs to the D-glutamate cyclase family.

The polypeptide is Putative hydro-lyase RPB_3621 (Rhodopseudomonas palustris (strain HaA2)).